The chain runs to 187 residues: uncharacterized protein (187 aa).

This is an uncharacterized protein from Manihot esculenta (Cassava).